We begin with the raw amino-acid sequence, 502 residues long: Lysine--tRNA ligase (502 aa).

Mg(2+)-binding residues include glutamate 412 and glutamate 419.

It belongs to the class-II aminoacyl-tRNA synthetase family. Homodimer. Requires Mg(2+) as cofactor.

Its subcellular location is the cytoplasm. The enzyme catalyses tRNA(Lys) + L-lysine + ATP = L-lysyl-tRNA(Lys) + AMP + diphosphate. The protein is Lysine--tRNA ligase of Buchnera aphidicola subsp. Cinara cedri (strain Cc).